Reading from the N-terminus, the 686-residue chain is Leucine-rich repeat-containing protein 49 (686 aa).

LRR repeat units lie at residues 113–134 (HLRLLNFQHNFITRIQNISNLQ), 135–156 (RLIFLDLYDNQIEEISGLSTLK), 157–178 (SLRVLLLGKNRIKKISNLENLK), 179–200 (NLDVLDLHGNQITKIENVNHLC), 201–222 (DLRVLNLARNLLSHVDNLNGLD), 223–244 (SLTELNLRHNQITFVRDVDNLP), and 245–266 (CLQRLFLSFNNITSFESVSCLA). An LRRCT domain is found at 279-317 (NPIAQESWYKHTVLQNMMQLRQLDMKRITEEERRVASVV). Disordered stretches follow at residues 311 to 332 (RRVASVVPKKEEEKKRESHKQS) and 359 to 381 (ASTQDRKDSESPPQESCQLDGGN). The stretch at 319–341 (KKEEEKKRESHKQSLLKEKKRLT) forms a coiled coil.

Part of the neuronal tubulin polyglutamylase complex which contains TPGS1, TPGS2, TTLL1, LRRC49 and NICN1. Interacts with PCM1; TTLL1, TPGS1, TPGS2 and LRRC49.

It localises to the cytoplasm. The protein resides in the cytoskeleton. The protein localises to the microtubule organizing center. Its subcellular location is the centrosome. It is found in the centriolar satellite. Subunit of the tubulin polyglutamylase complex (TPGC). The complex mediates cilia and flagella polyglutamylation which is essential for their biogenesis and motility. This is Leucine-rich repeat-containing protein 49 (Lrrc49) from Mus musculus (Mouse).